A 476-amino-acid chain; its full sequence is FAD-dependent monooxygenase ausM (476 aa).

3 residues coordinate FAD: Glu-41, Gly-55, and Arg-114. Residue Tyr-222 is part of the active site. Residues Asp-314 and Ala-327 each coordinate FAD. The chain crosses the membrane as a helical span at residues 447 to 467 (LGSTPIHMLTLLLPCLFYFMY).

The protein belongs to the paxM FAD-dependent monooxygenase family. FAD is required as a cofactor.

It is found in the membrane. It participates in secondary metabolite biosynthesis; terpenoid biosynthesis. Its function is as follows. FAD-dependent monooxygenase; part of the gene cluster A that mediates the biosynthesis of the fungal meroterpenoid acetoxydehydroaustin. The first step of the pathway is the synthesis of 3,5-dimethylorsellinic acid by the polyketide synthase ausA. 3,5-dimethylorsellinic acid is then prenylated by the polyprenyl transferase ausN. Further epoxidation by the FAD-dependent monooxygenase ausM and cyclization by the probable terpene cyclase ausL lead to the formation of protoaustinoid A. Protoaustinoid A is then oxidized to spiro-lactone preaustinoid A3 by the combined action of the FAD-binding monooxygenases ausB and ausC, and the dioxygenase ausE. Acid-catalyzed keto-rearrangement and ring contraction of the tetraketide portion of preaustinoid A3 by ausJ lead to the formation of preaustinoid A4. The aldo-keto reductase ausK, with the help of ausH, is involved in the next step by transforming preaustinoid A4 into isoaustinone which is in turn hydroxylated by the P450 monooxygenase ausI to form austinolide. The cytochrome P450 monooxygenase ausG then modifies austinolide to austinol. Austinol is further acetylated to austin by the O-acetyltransferase ausP, which spontaneously changes to dehydroaustin. The cytochrome P450 monooxygenase then converts dehydroaustin is into 7-dehydrodehydroaustin. The hydroxylation catalyzed by ausR permits the second O-acetyltransferase ausQ to add an additional acetyl group to the molecule, leading to the formation of acetoxydehydroaustin. Due to genetic rearrangements of the clusters and the subsequent loss of some enzymes, the end product of the Penicillium brasilianum austinoid biosynthesis clusters is acetoxydehydroaustin. This chain is FAD-dependent monooxygenase ausM, found in Penicillium brasilianum.